The chain runs to 117 residues: MSNVNSRLRRARKTRAKIAELKAIRLSVHRSNCHIYAQIIAETGDKVLASASTLEVEVRKDIKNGGNIAAAALVGKRIAEKAKAAGITTVAFDRSGYKYHGRIKALADAAREHGLSF.

The protein belongs to the universal ribosomal protein uL18 family. In terms of assembly, part of the 50S ribosomal subunit; part of the 5S rRNA/L5/L18/L25 subcomplex. Contacts the 5S and 23S rRNAs.

Functionally, this is one of the proteins that bind and probably mediate the attachment of the 5S RNA into the large ribosomal subunit, where it forms part of the central protuberance. This chain is Large ribosomal subunit protein uL18, found in Methylobacillus flagellatus (strain ATCC 51484 / DSM 6875 / VKM B-1610 / KT).